A 221-amino-acid chain; its full sequence is Ribosomal RNA small subunit methyltransferase G (221 aa).

S-adenosyl-L-methionine is bound by residues glycine 85, leucine 90, 138–139, and arginine 151; that span reads AE.

It belongs to the methyltransferase superfamily. RNA methyltransferase RsmG family.

The protein localises to the cytoplasm. It carries out the reaction guanosine(527) in 16S rRNA + S-adenosyl-L-methionine = N(7)-methylguanosine(527) in 16S rRNA + S-adenosyl-L-homocysteine. Its function is as follows. Specifically methylates the N7 position of guanine in position 527 of 16S rRNA. This chain is Ribosomal RNA small subunit methyltransferase G, found in Caulobacter sp. (strain K31).